Here is a 363-residue protein sequence, read N- to C-terminus: Autophagy-related protein 3 (363 aa).

2 stretches are compositionally biased toward basic and acidic residues: residues 84 to 106 (DFAGDAGHDETVVRDGEDFRGDG) and 129 to 138 (ARVRDVRTVD). A flexible region region spans residues 84–171 (DFAGDAGHDE…DDEAIIRDPK (88 aa)). The interval 84 to 174 (DFAGDAGHDE…AIIRDPKADN (91 aa)) is disordered. Acidic residues predominate over residues 139–164 (ESGEMGEREDDEDDIPDMEDDDDDDE). C247 acts as the Glycyl thioester intermediate in catalysis. The tract at residues 251–339 (SVMKTLLDRA…EEEVAIRVDQ (89 aa)) is handle region.

It belongs to the ATG3 family. In terms of assembly, monomer. Interacts with atg8 through an intermediate thioester bond through the C-terminal Gly of atg8. Interacts with the C-terminal region of the E1-like atg7 enzyme. Also interacts with the atg12-atg5 conjugate.

The protein localises to the cytoplasm. E2 conjugating enzyme required for the cytoplasm to vacuole transport (Cvt) and autophagy. Required for selective autophagic degradation of the nucleus (nucleophagy) as well as for mitophagy which contributes to regulate mitochondrial quantity and quality by eliminating the mitochondria to a basal level to fulfill cellular energy requirements and preventing excess ROS production. Responsible for the E2-like covalent binding of phosphatidylethanolamine to the C-terminal Gly of atg8. The atg12-atg5 conjugate plays a role of an E3 and promotes the transfer of atg8 from atg3 to phosphatidylethanolamine (PE). This step is required for the membrane association of atg8. The formation of the atg8-phosphatidylethanolamine conjugate is essential for autophagy and for the cytoplasm to vacuole transport (Cvt). The atg8-PE conjugate mediates tethering between adjacent membranes and stimulates membrane hemifusion, leading to expansion of the autophagosomal membrane during autophagy. Required for normal mycelial growth and conidiogenesis, and regulates sclerotial formation. Plays an essential role in pathogenesis. This chain is Autophagy-related protein 3, found in Botryotinia fuckeliana (strain BcDW1) (Noble rot fungus).